Consider the following 780-residue polypeptide: Alpha-xylosidase (780 aa).

N-linked (GlcNAc...) asparagine glycosylation is found at asparagine 48, asparagine 84, asparagine 247, and asparagine 298. Residues aspartate 434 and glutamate 437 contribute to the active site. An N-linked (GlcNAc...) asparagine glycan is attached at asparagine 443. The Proton donor role is filled by aspartate 501. A glycan (N-linked (GlcNAc...) asparagine) is linked at asparagine 718.

Belongs to the glycosyl hydrolase 31 family.

Its subcellular location is the secreted. The enzyme catalyses Hydrolysis of terminal, non-reducing alpha-D-xylose residues with release of alpha-D-xylose.. Its function is as follows. Catalyzes the liberation of alpha-xylose from the non-reducing terminal glucose of xyloglucan oligosaccharides. This is Alpha-xylosidase from Emericella nidulans (strain FGSC A4 / ATCC 38163 / CBS 112.46 / NRRL 194 / M139) (Aspergillus nidulans).